The following is a 234-amino-acid chain: Adenosine 5'-phosphosulfate reductase (234 aa).

Cys120, Cys121, Cys203, and Cys206 together coordinate [4Fe-4S] cluster. The active-site Nucleophile; cysteine thiosulfonate intermediate is Cys229.

The protein belongs to the PAPS reductase family. CysH subfamily. It depends on [4Fe-4S] cluster as a cofactor.

It localises to the cytoplasm. It catalyses the reaction [thioredoxin]-disulfide + sulfite + AMP + 2 H(+) = adenosine 5'-phosphosulfate + [thioredoxin]-dithiol. Its pathway is sulfur metabolism; hydrogen sulfide biosynthesis; sulfite from sulfate. Catalyzes the formation of sulfite from adenosine 5'-phosphosulfate (APS) using thioredoxin as an electron donor. This Bacillus cereus (strain ZK / E33L) protein is Adenosine 5'-phosphosulfate reductase.